Consider the following 627-residue polypeptide: MTNLYEAYDVVVVGAGHAGCEAALACARLGFNTIMLTVSMDNIALMPCNPNIGGTSKGHLVREIDALGGEMGKNIDKTYIQSKMLNQSKGPAVHSLRAQADKMDYCREMRKVVENTDNLTLRQDEVIDILTENNEVTGVKVYSGGVYPCKVVILCTGVYLNARCIYGETSHYTGPNGLPSANHLTESLKKLGIEMYRFKTGTPARIDKRSIDFSKMEEQFGDEKVVPFSFINNPEDIEKEQISCWLTYTNENTHDIIRDNIHRSPLYSGNIKGTGPRYCPSIEDKVVKFPDKDRHQVFIEPEGNYTNEMYISGMSSSLPEDVQFKMYRSVSGLENAKIVRNAYAIEYDCINPMQLKSSLEFMSINGLFSGGQFNGSSGYEEAAAQGLMAGINAARKLSGKEPIVLDRSQAYIGVLIDDLVTKETHEPYRMMTSRAEYRLILRQDNADQRLTRIGHEIGLISEDRYEHLIDKERMIKEEMMRLENSLIGASKEVQEILEGLGTTTLKTGTTLAELVRRPELTYAALAPLDKNREPLPEEVITQVEINFKYDGYIKRQEHQVEQFKKLEGKKIPEDLDYSDVPSLRIEAKQKLNQIKPSSVGQASRISGVSPADISVLLVYLEQIRRKK.

14 to 19 is a binding site for FAD; it reads GAGHAG. Residue 275-289 coordinates NAD(+); it reads GPRYCPSIEDKVVKF.

The protein belongs to the MnmG family. Homodimer. Heterotetramer of two MnmE and two MnmG subunits. Requires FAD as cofactor.

Its subcellular location is the cytoplasm. Its function is as follows. NAD-binding protein involved in the addition of a carboxymethylaminomethyl (cmnm) group at the wobble position (U34) of certain tRNAs, forming tRNA-cmnm(5)s(2)U34. The protein is tRNA uridine 5-carboxymethylaminomethyl modification enzyme MnmG of Lachnoclostridium phytofermentans (strain ATCC 700394 / DSM 18823 / ISDg) (Clostridium phytofermentans).